Consider the following 415-residue polypeptide: MSLQAPKGTKDLLPTESYKWQYLENKFRNIAADFGCREIRTPVFEYTELFQRGVGETTDVVQKEMYTFEDKAGRSITLKPEGTSPAVRAFVEGRLFNETQPTKMYYFTPVMRYENVQKGRLRQHHQFGIEIFGAKDASVDAEVISIPVGIYKELGVEGVELNINSIGCPKCRKTYNEALKKYLSKNYDKLCSTCKTRFDKNPLRILDCKVDTCKEIVKDAPIILDYICDECRDHFEALKSYLDVLDIKYKVDPFIVRGLDYYSKTVFEFIIDDITICAGGRYDYLIEEIGGPSMPAVGFGMGIERLLLTLQEKAIEIPEEAYVDLYLGNMGDKAKLEVLKLAKELRDRHIKCEIDHMGKSVKAQMKYANKIGAKYSMVLGEEELNTGKVALKRMEDGQQIEVDIKEIDTLIKVFK.

The protein belongs to the class-II aminoacyl-tRNA synthetase family. In terms of assembly, homodimer.

It localises to the cytoplasm. It catalyses the reaction tRNA(His) + L-histidine + ATP = L-histidyl-tRNA(His) + AMP + diphosphate + H(+). The chain is Histidine--tRNA ligase from Clostridium botulinum (strain Loch Maree / Type A3).